A 59-amino-acid polypeptide reads, in one-letter code: Large ribosomal subunit protein bL32 (59 aa).

The interval 1-20 is disordered; that stretch reads MAVPRNRHSNARKNIRRSHH.

The protein belongs to the bacterial ribosomal protein bL32 family.

In Chlamydia trachomatis serovar A (strain ATCC VR-571B / DSM 19440 / HAR-13), this protein is Large ribosomal subunit protein bL32.